We begin with the raw amino-acid sequence, 194 residues long: MSNEENKVNEEAVVEEQVEAVGTEADVEWNESAEDSQEAKIAELEAALLASQAQIKEQQDTVLRAKAEEQNVRRRAEEDVDKARKYALKKFAGELLPVLDNLERALENGDKENEAAKALLEGVELTLQTFVSTVEKFGLTVINPMGEAFNPELHQAIGMQASPDHESNTVMIVMQKGYTLNDQVLRPAMVMVAQ.

The protein belongs to the GrpE family. Homodimer.

Its subcellular location is the cytoplasm. Functionally, participates actively in the response to hyperosmotic and heat shock by preventing the aggregation of stress-denatured proteins, in association with DnaK and GrpE. It is the nucleotide exchange factor for DnaK and may function as a thermosensor. Unfolded proteins bind initially to DnaJ; upon interaction with the DnaJ-bound protein, DnaK hydrolyzes its bound ATP, resulting in the formation of a stable complex. GrpE releases ADP from DnaK; ATP binding to DnaK triggers the release of the substrate protein, thus completing the reaction cycle. Several rounds of ATP-dependent interactions between DnaJ, DnaK and GrpE are required for fully efficient folding. The chain is Protein GrpE from Aliivibrio fischeri (strain MJ11) (Vibrio fischeri).